Reading from the N-terminus, the 479-residue chain is V-type ATP synthase beta chain (479 aa).

Residues 458 to 479 (EGDSEREAPKMDSPHEEISEKS) form a disordered region.

This sequence belongs to the ATPase alpha/beta chains family.

Functionally, produces ATP from ADP in the presence of a proton gradient across the membrane. The V-type beta chain is a regulatory subunit. The chain is V-type ATP synthase beta chain from Nitrosococcus oceani (strain ATCC 19707 / BCRC 17464 / JCM 30415 / NCIMB 11848 / C-107).